Here is a 156-residue protein sequence, read N- to C-terminus: Myosin regulatory light chain B, smooth adductor muscle (156 aa).

Ala-1 is modified (blocked amino end (Ala)). EF-hand domains follow at residues 15–50 (KQIQ…LGRT) and 84–119 (DTEE…MGDN). Ca(2+)-binding residues include Asp-28, Asn-30, Asp-32, and Asp-39.

Functionally, in molluscan muscle, calcium regulation is associated with myosin rather than with actin. Muscle myosin contains two types of light chains: the catalytic light chain, essential for ATPase activity, and the regulatory light chain, a calcium-binding protein responsible for Ca(2+) dependent binding and Ca(2+) dependent Mg-ATPase activity. This chain is Myosin regulatory light chain B, smooth adductor muscle, found in Mizuhopecten yessoensis (Japanese scallop).